Reading from the N-terminus, the 384-residue chain is N-acetylneuraminate epimerase (384 aa).

The signal sequence occupies residues methionine 1–alanine 24. 7 Kelch repeats span residues lysine 46 to glycine 90, asparagine 92 to aspartate 145, lysine 147 to aspartate 184, aspartate 185 to glycine 230, isoleucine 233 to alanine 281, alanine 303 to glycine 352, and valine 354 to valine 383. Catalysis depends on glutamate 239, which acts as the Proton acceptor.

The protein belongs to the NanM family. As to quaternary structure, homodimer.

Its subcellular location is the periplasm. The enzyme catalyses N-acetyl-alpha-neuraminate = N-acetyl-beta-neuraminate. Its function is as follows. Converts alpha-N-acetylneuranimic acid (Neu5Ac) to the beta-anomer, accelerating the equilibrium between the alpha- and beta-anomers. Probably facilitates sialidase-negative bacteria to compete successfully for limited amounts of extracellular Neu5Ac, which is likely taken up in the beta-anomer. In addition, the rapid removal of sialic acid from solution might be advantageous to the bacterium to damp down host responses. This Vibrio vulnificus (strain YJ016) protein is N-acetylneuraminate epimerase.